Here is a 406-residue protein sequence, read N- to C-terminus: Aminomethyltransferase, mitochondrial (406 aa).

Residues 1–29 (MRGGLWQLGQSITRRLAQADKKTIGRRCF) constitute a mitochondrion transit peptide. Glu-234, Arg-265, and Tyr-403 together coordinate substrate.

The protein belongs to the GcvT family. In terms of assembly, the glycine cleavage system is composed of four proteins: P, T, L and H.

The protein localises to the mitochondrion. It carries out the reaction N(6)-[(R)-S(8)-aminomethyldihydrolipoyl]-L-lysyl-[protein] + (6S)-5,6,7,8-tetrahydrofolate = N(6)-[(R)-dihydrolipoyl]-L-lysyl-[protein] + (6R)-5,10-methylene-5,6,7,8-tetrahydrofolate + NH4(+). Functionally, the glycine cleavage system catalyzes the degradation of glycine. The chain is Aminomethyltransferase, mitochondrial (GDCST) from Solanum tuberosum (Potato).